The sequence spans 713 residues: Low-density lipoprotein receptor-related protein 10 (713 aa).

The signal sequence occupies residues 1-16; sequence MLLATLLLLLLGGALA. At 17–440 the chain is on the extracellular side; it reads HPDRIIFPNH…WDCSYVLPRK (424 aa). 2 cysteine pairs are disulfide-bonded: Cys-28–Cys-57 and Cys-80–Cys-98. Residues 28 to 136 enclose the CUB 1 domain; sequence CEDPPAVLLE…QGFLLSYSQD (109 aa). The N-linked (GlcNAc...) asparagine glycan is linked to Asn-56. Asn-111 is a glycosylation site (N-linked (GlcNAc...) asparagine). The LDL-receptor class A 1 domain maps to 139-175; that stretch reads MCLQEEFQCLNHRCVSAVQRCDGVDACGDGSDEAGCS. Disulfide bonds link Cys-140/Cys-152, Cys-147/Cys-165, Cys-159/Cys-174, and Cys-192/Cys-220. Residues 192–305 enclose the CUB 2 domain; the sequence is CNVTLEDFYG…RGFNATYHVR (114 aa). Asn-193 and Asn-299 each carry an N-linked (GlcNAc...) asparagine glycan. 3 LDL-receptor class A domains span residues 307 to 354, 355 to 397, and 398 to 434; these read YCLP…EDCP, GCPP…RRCR, and HCQP…WDCS. Cystine bridges form between Cys-308/Cys-331, Cys-315/Cys-344, Cys-338/Cys-353, Cys-356/Cys-374, Cys-363/Cys-387, Cys-381/Cys-396, Cys-399/Cys-411, Cys-406/Cys-424, and Cys-418/Cys-433. Residues 441-461 traverse the membrane as a helical segment; that stretch reads VITAAVIGSLVCGLLLVIALG. The Cytoplasmic segment spans residues 462–713; that stretch reads CTCKLYAIRT…AEAEDEPLLT (252 aa). The segment at 564 to 637 is disordered; that stretch reads GLLPRTNTPA…SPAPTTVPEA (74 aa). A compositionally biased stretch (polar residues) spans 569–584; that stretch reads TNTPARASEARSQVTP. Thr-596 carries the post-translational modification Phosphothreonine. A compositionally biased stretch (low complexity) spans 621-636; it reads PLPSASTSPAPTTVPE.

This sequence belongs to the LDLR family. As to expression, expressed in blood leukocyte, lung, placenta, small intestine, liver, kidney, spleen, thymus, colon, skeletal muscle and heart.

The protein resides in the membrane. It localises to the coated pit. Its function is as follows. Probable receptor, which is involved in the internalization of lipophilic molecules and/or signal transduction. May be involved in the uptake of lipoprotein APOE in liver. The polypeptide is Low-density lipoprotein receptor-related protein 10 (LRP10) (Homo sapiens (Human)).